A 1125-amino-acid polypeptide reads, in one-letter code: Transcription-repair-coupling factor (1125 aa).

A Helicase ATP-binding domain is found at 597 to 758; that stretch reads DMMSFKVMDR…LIKLRDISVL (162 aa). Residue 610 to 617 participates in ATP binding; it reads GDVGFGKT. The short motif at 711–714 is the DEEQ box element; that stretch reads DEEQ. The region spanning 774-933 is the Helicase C-terminal domain; it reads SFSELLIKHA…GFKIAMKDME (160 aa).

The protein in the N-terminal section; belongs to the UvrB family. This sequence in the C-terminal section; belongs to the helicase family. RecG subfamily.

The protein localises to the cytoplasm. In terms of biological role, couples transcription and DNA repair by recognizing RNA polymerase (RNAP) stalled at DNA lesions. Mediates ATP-dependent release of RNAP and its truncated transcript from the DNA, and recruitment of nucleotide excision repair machinery to the damaged site. This is Transcription-repair-coupling factor from Borreliella burgdorferi (strain ATCC 35210 / DSM 4680 / CIP 102532 / B31) (Borrelia burgdorferi).